Reading from the N-terminus, the 732-residue chain is Wall-associated receptor kinase 2 (732 aa).

An N-terminal signal peptide occupies residues 1-23 (MKVQEGLFVVAVFYLAYTQLVKG). Residues 24-329 (QPRKECQTRC…RKVRPEYFRW (306 aa)) are Extracellular-facing. Residues asparagine 57, asparagine 75, asparagine 111, asparagine 154, asparagine 217, and asparagine 246 are each glycosylated (N-linked (GlcNAc...) asparagine). In terms of domain architecture, EGF-like 1 spans 230–277 (GDKTCKQVEYRGVCGGNSTCFDSTGGTGYNCKCLEGFEGNPYLPNGCQ). Disulfide bonds link cysteine 234/cysteine 249, cysteine 243/cysteine 260, cysteine 262/cysteine 276, cysteine 282/cysteine 295, cysteine 289/cysteine 304, and cysteine 306/cysteine 318. In terms of domain architecture, EGF-like 2; calcium-binding spans 278-319 (DINECISSRHNCSEHSTCENTKGSFNCNCPSGYRKDSLNSCT). The N-linked (GlcNAc...) asparagine glycan is linked to asparagine 288. Residues 330-350 (TQIFLGTTIGFSVIMLGISCL) form a helical membrane-spanning segment. Residues 351–732 (QQKIKHRKNT…VTTLDIEAGR (382 aa)) lie on the Cytoplasmic side of the membrane. Phosphothreonine is present on threonine 393. One can recognise a Protein kinase domain in the interval 404-677 (YHESRILGQG…KEVAAELEAL (274 aa)). ATP-binding positions include 410 to 418 (LGQGGQGTV) and lysine 432. Tyrosine 477 carries the post-translational modification Phosphotyrosine. Aspartate 529 (proton acceptor) is an active-site residue. Phosphothreonine is present on residues threonine 563 and threonine 568. Tyrosine 576 bears the Phosphotyrosine mark.

It belongs to the protein kinase superfamily. Ser/Thr protein kinase family. In terms of tissue distribution, predominantly expressed in green tissues such as stems and leaves. Detected at organ junctions.

The protein resides in the membrane. It carries out the reaction L-seryl-[protein] + ATP = O-phospho-L-seryl-[protein] + ADP + H(+). The catalysed reaction is L-threonyl-[protein] + ATP = O-phospho-L-threonyl-[protein] + ADP + H(+). Functionally, serine/threonine-protein kinase that may function as a signaling receptor of extracellular matrix component. Binding to pectin may have significance in the control of cell expansion, morphogenesis and development. The polypeptide is Wall-associated receptor kinase 2 (WAK2) (Arabidopsis thaliana (Mouse-ear cress)).